Consider the following 383-residue polypeptide: S-adenosylmethionine synthase (383 aa).

His-15 contacts ATP. Asp-17 lines the Mg(2+) pocket. Glu-43 serves as a coordination point for K(+). L-methionine is bound by residues Glu-56 and Gln-99. A flexible loop region spans residues 99-109; the sequence is QSPDINQGVDR. Residues 164–166, 230–231, Asp-239, 245–246, Ala-262, and Lys-266 each bind ATP; these read DAK, RF, and RK. Asp-239 is a binding site for L-methionine. Position 270 (Lys-270) interacts with L-methionine.

The protein belongs to the AdoMet synthase family. Homotetramer; dimer of dimers. It depends on Mg(2+) as a cofactor. Requires K(+) as cofactor.

It localises to the cytoplasm. The catalysed reaction is L-methionine + ATP + H2O = S-adenosyl-L-methionine + phosphate + diphosphate. It functions in the pathway amino-acid biosynthesis; S-adenosyl-L-methionine biosynthesis; S-adenosyl-L-methionine from L-methionine: step 1/1. Its function is as follows. Catalyzes the formation of S-adenosylmethionine (AdoMet) from methionine and ATP. The overall synthetic reaction is composed of two sequential steps, AdoMet formation and the subsequent tripolyphosphate hydrolysis which occurs prior to release of AdoMet from the enzyme. The polypeptide is S-adenosylmethionine synthase (Pectobacterium atrosepticum (strain SCRI 1043 / ATCC BAA-672) (Erwinia carotovora subsp. atroseptica)).